A 2642-amino-acid chain; its full sequence is MQGPTNEPIAIIGTGCRFPGGSNTASKLWDLLKDPKDVSKEVPEDRFNLDRFYHKDSSHHGTANVRRSYLLDEDVRLFDTQFFGISPGEAQAMDPQHRVLLEVVYEAIESAGKTIHGLHNSDTAVYVGLMCTDYYVIQAADLNSVPTYNATGVANSNASSRVSYFFNWHGPSMTIDTACSSSLVAVHEAVQALRNGTSRMAVACGTNLILSPLPFISESNLSMLSPTGKSRMWDADADGYARGEGVAAVVLKPLSAAIEDNDVIECIIREVGVNQDGKTRGITMPSAQAQASLIRQTYAKAGLDPATPEGRCQFFEAHGTGTPAGDPQEAEALKTAFFPNETDSVTNGTNGLLSEADNLLVGSIKTVIGHTEGTAGLAGLIKACMALKHGAVPPNLLFNRLNPALEPFTKHLSIPTSLTPWPTLLTNVPRRASVNSFGFGGTNAHAILEAYSQAPQNSFATPSSSPLVVPAIPFVFSAASETSLRGVLESFLEYLNTSKDKDESLDLTSLAYILSTKRTVLSQRVSIIASTFEQLLEKVEAVLDDSASSVVGSKAATLSHPALLGVFTGQGAQWATMGTKLMRSNPLAQSVIQDLDAVLASLPECHRPRWSLGRELLADTTSRIKEAELSQPLCTAVQIMLVDLLKANGVQFQGVVGHSSGEIAAAYAAGFVSSADAIKIAYYRGYFAKLASGSSSTGKDSSVKGSMMAVGTTYEDAIELCQLEDFRGRISLAAHNGPNSVTLSGDSDAINQAHFIFSEEEKKFARLLKVDTAYHSSHMQPCVSPYTEALQACGIVAREPASDAPKWFSSVRSGKPVLDVDGLDCQYWVDNLLSPVMFHEAVQGCLDSSDTYNAILEIGPHAALKGPLDESVLELMGNKLPYTSALVRGKDDIESFSTALGFLWTQFGNQCVDLGTFQKRVSKDTGSKLCSTMDDLPTYAWTHDKPLWAESRSTKLFRTMPGSFHDLLGIQTADGTAEEWRWQNILKTKELPWMVGHALQGQIVFPGTGYIALAMEASLQIAQGRPVSKIDLYDLEIRKAIAVNESASGTELLVTMTNVSAIHPDVETITADFATYSTISRESGSMALNCCGKVCIFLQTETVTTTGSDGHAAEQFATRSTPVPGMAGIDVERFYSAMQHDLGYMYSGPFRGLSRLSRKLGFSEGSIQRPPFGEDGSETTLIFHPGMLDNALQGLFAAYSAPGDGRLWSMRAPTACRRVSLVPSLCGPNMTEEVDFDCTLTDSRDDFITGDVEVYASGYSQRIIEIEGLSFSPFAAATDRDDRQLFQEQIWCVNEADGPLVLGNMAPTFEERTKALDAERAAFFYLKKLHLSVPSDQRSQLPWYRQSLLDNAERLYDLVCSGTHSYAPQSWIQDTKEDVYAMMESYGPQDADFNLTKAVGENLPLPDVIKGDTNILQYMTQNNYLDRYYTHAIGFGWLNVLISGVVGQIADKHPKMRFLEIGAGTGGATGAVLDRIGQAYSSYTYTDISSGFFERAVDKFQDHAGKMLFKMLDIEKDPVSQGFPEHSYDIILAANVLHATKNLTETLQNTRRLLKPGGFLVLMEILGNDVMRIGLVMGGLPGWWVGKDDGRRWGPTITLEEWDTLLKGTGFAGVDTNTPMPDKVQMPGSVFVAQAVDDRIVKLRDPLQHDALPSAATDHVNGIQNGHTPSPTISKGTSHLVVIGGSSTSGSKLASDIIRVLSPLFAEIIHIPQLDSKDAIAKIPSNVDLHILSLTECDTGGTFFHNISNTAWQNFQHLLATSPASLLWVVPNTRSGNPLGAIGTGLFRSLFYEIPETKFQVLDLDEKATGYLSGCAGLIAKLVQQLRLVTDTSSARGPSTLTPETSEDDLQSVNDGTATVEMLWTVEPELYLHDGRLYISRVRLQKAQNDRYNSWRRPILQLTESKSTVDPSLSTSSLGRQTSLELQWKDDAYYNLKEINWFAKPLSTDSATIDVSCSLASCLKTPAGFFFVQVGTDVNTGEKKLCLSTENRSRVTVHSSWTETLKQEHDVADGQYMSFIVADMIVQQIMYMLPPTGILLLHEPDPGLASLLTRQLANIGRKVVFTTTRSDKSTNLLSKANWIFMHPRLNKRLIESALPHGVTFFIDCGQAEDVIHEGSHGKDHGLGLRLHNSLSRTCVKRTLQDLTSRTASVAPHEATGEVVKLLHRITTFAAAQLNSVPDGAPLKVKSLSEIVSRAKTRALATAEGCSTGPFCLVNWHAESQVPISVAPVWDRDDLFRSDRTYWMLGLTGDLGRSLAEFMISRGARHVVLSSRTPQPDEMWVERQQKKYGATVVYIAVDLTSLDSVQKAHKQIVKSMPPLAGVANGALVLKDSSVAKMTIEQLQAVLRPKVDGTLHLQSVVDANSGSEEQPLDWFIAFSSIVGTTGNLGQAAYSAANGFLKAWVSQQRSMFGHNAAVIDISRVLGVGYVERETQSNSGRLTREQTDRLMNRTGTLAMSETDLHQLFAEAVVAADHCSASNTGLSVGARDAEIITGIAPISSAQAEDVFWARNPRFGLLVIDSNAAVGGDDQDGKGSERRQVPVKTQLAAANTPQEVTSVLTSCIVTKLRASLFLSASDSFSETVALVDQGVDSLVGVDIRTWCIKELDVDVPVLKILGGASVVDLADYILESLPVKEKSK.

Residues 6–450 (NEPIAIIGTG…GTNAHAILEA (445 aa)) form the Ketosynthase family 3 (KS3) domain. Catalysis depends on for beta-ketoacyl synthase activity residues cysteine 179, histidine 318, and histidine 370. A malonyl-CoA:ACP transacylase (MAT) domain region spans residues 566 to 890 (VFTGQGAQWA…PYTSALVRGK (325 aa)). Serine 659 (for malonyltransferase activity) is an active-site residue. Residues 965–1101 (HDLLGIQTAD…GKVCIFLQTE (137 aa)) form an N-terminal hotdog fold region. Positions 965 to 1279 (HDLLGIQTAD…SFSPFAAATD (315 aa)) are dehydratase (DH) domain. The region spanning 965-1280 (HDLLGIQTAD…FSPFAAATDR (316 aa)) is the PKS/mFAS DH domain. Histidine 997 serves as the catalytic Proton acceptor; for dehydratase activity. The interval 1126–1280 (MAGIDVERFY…FSPFAAATDR (155 aa)) is C-terminal hotdog fold. Residue aspartate 1189 is the Proton donor; for dehydratase activity of the active site. Residues 1423 to 1622 (NYLDRYYTHA…GVDTNTPMPD (200 aa)) form a methyltransferase (MET) domain region. The tract at residues 2244–2423 (TYWMLGLTGD…GHNAAVIDIS (180 aa)) is ketoreductase (KR) domain. One can recognise a Carrier domain in the interval 2556-2635 (QEVTSVLTSC…DLADYILESL (80 aa)). Position 2595 is an O-(pantetheine 4'-phosphoryl)serine (serine 2595).

The cofactor is pantetheine 4'-phosphate.

Its pathway is secondary metabolite biosynthesis. Reducing polyketide synthase; part of the gene cluster that mediates the biosynthesis of fusarielins F, G and H, decaketide compounds with 5 methylations and a decaline core that act as mycoestrogens as they stimulate growth of MCF-7 breast cancer cells. The initial compound in the pathway is produced by the reducing polyketide synthase FSL1. FSL1 lacks an active enoyl reductase (ER) domain and biosynthesis of fusarielins relies on the trans-acting enoyl reductase FSL5, before it is released through hydrolysis catalyzed by the thioesterase FSL2. Fusarielins F, G, and H have a C11=C12 cis double bond and is fully reduced between C10 and C11 and between C12 and C13. FSL3 can be involved in the formation of the C11=C12 cis double bond by moving a hypothetical C10=C11 or C12=C13 trans double bond to form prefusarielin. Prefusarielin is oxygenated at C15 and C16 by the cytochrome P450 monooxygenase FSL4, resulting in fusarielin F, which subsequently is epoxidized into fusarielin G by the same enzyme. The final step in the pathway is a reduction of the carboxylic acid moiety to yield fusarielin H via a still undetermined mechanism. The protein is Fusarielin synthase FSL1 of Gibberella zeae (strain ATCC MYA-4620 / CBS 123657 / FGSC 9075 / NRRL 31084 / PH-1) (Wheat head blight fungus).